A 721-amino-acid chain; its full sequence is Probable acyl-activating enzyme 17, peroxisomal (721 aa).

Residues 719–721 carry the Microbody targeting signal motif; it reads SKL.

It belongs to the ATP-dependent AMP-binding enzyme family. Expressed in leaves, stems and developing seeds.

It localises to the peroxisome. Its function is as follows. May act as an acid--thiol ligase that activates carboxylic acids by forming acyl-CoAs. This chain is Probable acyl-activating enzyme 17, peroxisomal (AAE17), found in Arabidopsis thaliana (Mouse-ear cress).